A 198-amino-acid polypeptide reads, in one-letter code: Protein UNCMA_24250 (198 aa).

The 190-residue stretch at 5-194 folds into the AMMECR1 domain; the sequence is EDGTLAVKTA…ETEPGGPVIE (190 aa).

The chain is Protein UNCMA_24250 from Methanocella arvoryzae (strain DSM 22066 / NBRC 105507 / MRE50).